Reading from the N-terminus, the 468-residue chain is Cysteine--tRNA ligase (468 aa).

Residue cysteine 29 coordinates Zn(2+). A 'HIGH' region motif is present at residues 31-41; the sequence is PTVYNYIHIGN. The Zn(2+) site is built by cysteine 209, histidine 234, and glutamate 238. Residues 266–270 carry the 'KMSKS' region motif; sequence KMSKS. Lysine 269 is a binding site for ATP.

It belongs to the class-I aminoacyl-tRNA synthetase family. In terms of assembly, monomer. It depends on Zn(2+) as a cofactor.

Its subcellular location is the cytoplasm. The catalysed reaction is tRNA(Cys) + L-cysteine + ATP = L-cysteinyl-tRNA(Cys) + AMP + diphosphate. The polypeptide is Cysteine--tRNA ligase (Brevibacillus brevis (strain 47 / JCM 6285 / NBRC 100599)).